The sequence spans 234 residues: Thiamine-phosphate synthase (234 aa).

4-amino-2-methyl-5-(diphosphooxymethyl)pyrimidine contacts are provided by residues 65-69 and Asn97; that span reads QYRNK. Residues Asp98 and Asp117 each contribute to the Mg(2+) site. Residue Ser136 participates in 4-amino-2-methyl-5-(diphosphooxymethyl)pyrimidine binding. 163–165 provides a ligand contact to 2-[(2R,5Z)-2-carboxy-4-methylthiazol-5(2H)-ylidene]ethyl phosphate; sequence SHT. 4-amino-2-methyl-5-(diphosphooxymethyl)pyrimidine is bound at residue Lys166. 2-[(2R,5Z)-2-carboxy-4-methylthiazol-5(2H)-ylidene]ethyl phosphate contacts are provided by residues Gly192 and 212–213; that span reads IS.

This sequence belongs to the thiamine-phosphate synthase family. Mg(2+) serves as cofactor.

The enzyme catalyses 2-[(2R,5Z)-2-carboxy-4-methylthiazol-5(2H)-ylidene]ethyl phosphate + 4-amino-2-methyl-5-(diphosphooxymethyl)pyrimidine + 2 H(+) = thiamine phosphate + CO2 + diphosphate. The catalysed reaction is 2-(2-carboxy-4-methylthiazol-5-yl)ethyl phosphate + 4-amino-2-methyl-5-(diphosphooxymethyl)pyrimidine + 2 H(+) = thiamine phosphate + CO2 + diphosphate. It carries out the reaction 4-methyl-5-(2-phosphooxyethyl)-thiazole + 4-amino-2-methyl-5-(diphosphooxymethyl)pyrimidine + H(+) = thiamine phosphate + diphosphate. Its pathway is cofactor biosynthesis; thiamine diphosphate biosynthesis; thiamine phosphate from 4-amino-2-methyl-5-diphosphomethylpyrimidine and 4-methyl-5-(2-phosphoethyl)-thiazole: step 1/1. Condenses 4-methyl-5-(beta-hydroxyethyl)thiazole monophosphate (THZ-P) and 2-methyl-4-amino-5-hydroxymethyl pyrimidine pyrophosphate (HMP-PP) to form thiamine monophosphate (TMP). This chain is Thiamine-phosphate synthase, found in Xylella fastidiosa (strain Temecula1 / ATCC 700964).